Here is a 143-residue protein sequence, read N- to C-terminus: ATP synthase subunit b' (143 aa).

Residues 6 to 26 traverse the membrane as a helical segment; sequence ATLPLMALQFVVLAFLLNAIF.

The protein belongs to the ATPase B chain family. F-type ATPases have 2 components, F(1) - the catalytic core - and F(0) - the membrane proton channel. F(1) has five subunits: alpha(3), beta(3), gamma(1), delta(1), epsilon(1). F(0) has four main subunits: a(1), b(1), b'(1) and c(10-14). The alpha and beta chains form an alternating ring which encloses part of the gamma chain. F(1) is attached to F(0) by a central stalk formed by the gamma and epsilon chains, while a peripheral stalk is formed by the delta, b and b' chains.

It is found in the cellular thylakoid membrane. Functionally, f(1)F(0) ATP synthase produces ATP from ADP in the presence of a proton or sodium gradient. F-type ATPases consist of two structural domains, F(1) containing the extramembraneous catalytic core and F(0) containing the membrane proton channel, linked together by a central stalk and a peripheral stalk. During catalysis, ATP synthesis in the catalytic domain of F(1) is coupled via a rotary mechanism of the central stalk subunits to proton translocation. In terms of biological role, component of the F(0) channel, it forms part of the peripheral stalk, linking F(1) to F(0). The b'-subunit is a diverged and duplicated form of b found in plants and photosynthetic bacteria. In Synechocystis sp. (strain ATCC 27184 / PCC 6803 / Kazusa), this protein is ATP synthase subunit b'.